We begin with the raw amino-acid sequence, 178 residues long: Large ribosomal subunit protein uL10 (178 aa).

It belongs to the universal ribosomal protein uL10 family. As to quaternary structure, part of the ribosomal stalk of the 50S ribosomal subunit. The N-terminus interacts with L11 and the large rRNA to form the base of the stalk. The C-terminus forms an elongated spine to which L12 dimers bind in a sequential fashion forming a multimeric L10(L12)X complex.

Forms part of the ribosomal stalk, playing a central role in the interaction of the ribosome with GTP-bound translation factors. The chain is Large ribosomal subunit protein uL10 from Salinibacter ruber (strain DSM 13855 / M31).